A 372-amino-acid polypeptide reads, in one-letter code: Fork head domain-containing protein FD4 (372 aa).

The fork-head DNA-binding region spans 12–103; sequence QKPPYSYISL…FDMFENGSLL (92 aa). Disordered regions lie at residues 225–245 and 261–281; these read ESLI…DEDD and PTTP…RTED.

Expressed in early embryogenesis in 14 symmetrical pairs of segmentally arranged neuroblasts. Also, later in embryogenesis, in a cluster of cells in head region.

It is found in the nucleus. Functionally, involved in development during embryogenesis. This is Fork head domain-containing protein FD4 (fd96Ca) from Drosophila melanogaster (Fruit fly).